We begin with the raw amino-acid sequence, 207 residues long: Vexin (207 aa).

The tract at residues leucine 55 to serine 102 is disordered. The span at leucine 58–arginine 72 shows a compositional bias: basic and acidic residues.

The protein belongs to the vexin family.

It localises to the cell membrane. Its subcellular location is the nucleus. Functionally, required for neurogenesis in the neural plate and retina. Strongly cooperates with neural bHLH factors to promote neurogenesis. This is Vexin from Pongo abelii (Sumatran orangutan).